The primary structure comprises 250 residues: MRLLALLLMVGAAVAVPREDGRIIGGHECAAHSRPFMASLNYGYHFCGGVLINNQWVLSVAHCWYNPYAMQVMLGEHDLRKFEGTEQLMKTDTIIWHPNYDYQTLDLTSCSSSSTILWKVTHAVAPIPLPTSCPVAGTPCSVSGWGNTARDGDEVYLPTLLQCMDVPIVDEEQCMKSYPDMISPRMVCAGFMDGSRDACNGDSGSPLVCRGEVYGLVSWGQGCAQPNYPGVYVKLCEFLGWIERTLEAYP.

An N-terminal signal peptide occupies residues 1–15 (MRLLALLLMVGAAVA). Residues 16-22 (VPREDGR) constitute a propeptide, activation peptide. One can recognise a Peptidase S1 domain in the interval 23 to 247 (IIGGHECAAH…FLGWIERTLE (225 aa)). Disulfide bonds link Cys-29/Cys-163, Cys-47/Cys-63, Cys-133/Cys-236, Cys-140/Cys-209, Cys-174/Cys-188, and Cys-199/Cys-223. Active-site charge relay system residues include His-62 and Asp-106. The Charge relay system role is filled by Ser-203.

Belongs to the peptidase S1 family.

The protein localises to the secreted. Its subcellular location is the extracellular space. It carries out the reaction Preferential cleavage: Arg-|-Xaa, Lys-|-Xaa.. In Pleuronectes platessa (European plaice), this protein is Trypsin.